The sequence spans 106 residues: Chaperone modulatory protein CbpM (106 aa).

This sequence belongs to the CbpM family.

Its function is as follows. Interacts with CbpA and inhibits both the DnaJ-like co-chaperone activity and the DNA binding activity of CbpA. Together with CbpA, modulates the activity of the DnaK chaperone system. Does not inhibit the co-chaperone activity of DnaJ. The chain is Chaperone modulatory protein CbpM from Coxiella burnetii (strain CbuK_Q154) (Coxiella burnetii (strain Q154)).